Reading from the N-terminus, the 984-residue chain is Ephrin type-A receptor 3 (984 aa).

A signal peptide spans 1–20; the sequence is MDCHLSILILFGCCVLSCSR. Residues 21-541 are Extracellular-facing; sequence ELSPQPSNEV…SFSISGENSH (521 aa). The 179-residue stretch at 29–207 folds into the Eph LBD domain; it reads EVNLLDSKTI…YFKKCPFTVK (179 aa). N-linked (GlcNAc...) asparagine glycans are attached at residues N232, N337, N391, N404, and N493. 2 consecutive Fibronectin type-III domains span residues 325–435 and 436–532; these read PPSA…TNQA and APSP…SPDS. A helical membrane pass occupies residues 542 to 565; sequence VVMIAISAAVAIIVLTVVTYVLVG. At 566-984 the chain is on the cytoplasmic side; the sequence is RFCGYHKSKH…TQSKNGPVPV (419 aa). Phosphotyrosine; by autocatalysis occurs at positions 597 and 603. The Protein kinase domain maps to 622–883; that stretch reads IAIDKVVGAG…QIVSILDKLI (262 aa). ATP is bound by residues 629–634, K654, and 701–707; these read GAGEFG and EYMENGS. The residue at position 702 (Y702) is a Phosphotyrosine; by autocatalysis. Residue D747 is the Proton acceptor of the active site. ATP is bound at residue 751–752; sequence RN. Position 780 is a phosphotyrosine; by autocatalysis (Y780). Residues 912–976 form the SAM domain; that stretch reads ATFHTTGDWL…ISSIKALETQ (65 aa). Phosphotyrosine is present on Y938. A PDZ-binding motif is present at residues 982–984; it reads VPV.

Belongs to the protein kinase superfamily. Tyr protein kinase family. Ephrin receptor subfamily. Heterotetramer upon binding of the ligand. The heterotetramer is composed of an ephrin dimer and a receptor dimer. Oligomerization is probably required to induce biological responses. Forms a ternary EFNA5-EPHA3-ADAM10 complex mediating EFNA5 extracellular domain shedding by ADAM10 which regulates the EFNA5-EPHA3 complex internalization and function. Interacts (phosphorylated) with PTPN1; dephosphorylates EPHA3 and may regulate its trafficking and function. Interacts (phosphorylated) with CRK; mediates EFNA5-EPHA3 signaling through RHOA GTPase activation. Interacts with NCK1 (via SH2 domain); mediates EFNA5-EPHA3 signaling. Autophosphorylates upon activation by EFNA5. Phosphorylation on Tyr-603 mediates interaction with NCK1. Dephosphorylated by PTPN1. In terms of tissue distribution, most abundant in the heart, brain and lung.

It is found in the cell membrane. It catalyses the reaction L-tyrosyl-[protein] + ATP = O-phospho-L-tyrosyl-[protein] + ADP + H(+). In terms of biological role, receptor tyrosine kinase which binds promiscuously membrane-bound ephrin family ligands residing on adjacent cells, leading to contact-dependent bidirectional signaling into neighboring cells. The signaling pathway downstream of the receptor is referred to as forward signaling while the signaling pathway downstream of the ephrin ligand is referred to as reverse signaling. Highly promiscuous for ephrin-A ligands it binds preferentially EFNA5. Upon activation by EFNA5 regulates cell-cell adhesion, cytoskeletal organization and cell migration. Plays a role in cardiac cells migration and differentiation and regulates the formation of the atrioventricular canal and septum during development probably through activation by EFNA1. Involved in the retinotectal mapping of neurons. May also control the segregation but not the guidance of motor and sensory axons during neuromuscular circuit development. This is Ephrin type-A receptor 3 (Epha3) from Rattus norvegicus (Rat).